The primary structure comprises 507 residues: Cytochrome c-type protein ImcH (507 aa).

Transmembrane regions (helical) follow at residues 14-34 (ISLIGFLLAVVATGLIIAFIA), 45-65 (YIGLLVYFAFPGMLILGLILV), and 100-120 (LFIFFVLASVIFVLIVSVASI). Cys132, Cys136, Met140, His152, Cys157, Cys160, His161, Asp400, Cys449, Cys452, His453, Cys487, Cys490, His491, and Glu496 together coordinate heme.

Belongs to the NapC/NirT/NrfH family. In terms of processing, binds 4 heme c groups covalently per subunit.

Its subcellular location is the cell inner membrane. Redox protein involved in a high-potential metal respiratory pathway. Is required only for electron transfer to terminal extracellular electron acceptors with redox potentials higher than -0.1 V. ImcH likely transfers electrons from the quinone pool to a periplasmic acceptor. The protein is Cytochrome c-type protein ImcH of Geobacter sulfurreducens (strain ATCC 51573 / DSM 12127 / PCA).